A 408-amino-acid polypeptide reads, in one-letter code: Imidazolonepropionase (408 aa).

Residues histidine 73 and histidine 75 each contribute to the Fe(3+) site. Positions 73 and 75 each coordinate Zn(2+). The 4-imidazolone-5-propanoate site is built by arginine 82, tyrosine 145, and histidine 178. Residue tyrosine 145 participates in N-formimidoyl-L-glutamate binding. Histidine 243 contacts Fe(3+). Residue histidine 243 participates in Zn(2+) binding. Residue glutamine 246 participates in 4-imidazolone-5-propanoate binding. Aspartate 318 contributes to the Fe(3+) binding site. Aspartate 318 is a Zn(2+) binding site. N-formimidoyl-L-glutamate-binding residues include asparagine 320 and glycine 322. Serine 323 is a 4-imidazolone-5-propanoate binding site.

It belongs to the metallo-dependent hydrolases superfamily. HutI family. The cofactor is Zn(2+). Fe(3+) serves as cofactor.

Its subcellular location is the cytoplasm. It carries out the reaction 4-imidazolone-5-propanoate + H2O = N-formimidoyl-L-glutamate. It participates in amino-acid degradation; L-histidine degradation into L-glutamate; N-formimidoyl-L-glutamate from L-histidine: step 3/3. Catalyzes the hydrolytic cleavage of the carbon-nitrogen bond in imidazolone-5-propanoate to yield N-formimidoyl-L-glutamate. It is the third step in the universal histidine degradation pathway. The protein is Imidazolonepropionase of Shewanella baltica (strain OS195).